A 1231-amino-acid polypeptide reads, in one-letter code: Cohesin subunit SA-2 (1231 aa).

The residue at position 1 (methionine 1) is an N-acetylmethionine. The tract at residues methionine 1–glutamine 75 is disordered. Positions lysine 36–lysine 48 are enriched in basic residues. The SCD domain occupies phenylalanine 293–methionine 378. Lysine 607 is modified (N6-acetyllysine). Serine 1058, serine 1061, serine 1064, and serine 1065 each carry phosphoserine. Positions glycine 1062–glycine 1087 are disordered. Residues arginine 1071–arginine 1082 show a composition bias toward basic residues. Threonine 1112 carries the post-translational modification Phosphothreonine. Phosphoserine is present on residues serine 1177 and serine 1178.

The protein belongs to the SCC3 family. Interacts directly with RAD21 in cohesin complex. Cohesin complexes are composed of a heterodimer between a SMC1 protein (SMC1A or SMC1B) and SMC3, which are attached via their hinge domain, and RAD21 which link them at their heads, and one STAG protein (STAG1, STAG2 or STAG3). In cohesin complexes, STAG2 is mutually exclusive with STAG1 and STAG3. In terms of processing, phosphorylated by PLK1. The large dissociation of cohesin from chromosome arms during prophase is partly due to its phosphorylation.

Its subcellular location is the nucleus. The protein localises to the chromosome. It is found in the centromere. Functionally, component of cohesin complex, a complex required for the cohesion of sister chromatids after DNA replication. The cohesin complex apparently forms a large proteinaceous ring within which sister chromatids can be trapped. At anaphase, the complex is cleaved and dissociates from chromatin, allowing sister chromatids to segregate. The cohesin complex may also play a role in spindle pole assembly during mitosis. This Mus musculus (Mouse) protein is Cohesin subunit SA-2 (Stag2).